A 303-amino-acid chain; its full sequence is Eukaryotic translation initiation factor 3 subunit G (303 aa).

A disordered region spans residues 1–38; sequence MATQTKHDWADDEDLEETTTTTAPTTDLPPPQKIQNKD. One can recognise an RRM domain in the interval 223–301; sequence ATLRVTNVSE…LILRVEFAKK (79 aa).

The protein belongs to the eIF-3 subunit G family. Component of the eukaryotic translation initiation factor 3 (eIF-3) complex.

The protein resides in the cytoplasm. In terms of biological role, RNA-binding component of the eukaryotic translation initiation factor 3 (eIF-3) complex, which is involved in protein synthesis of a specialized repertoire of mRNAs and, together with other initiation factors, stimulates binding of mRNA and methionyl-tRNAi to the 40S ribosome. The eIF-3 complex specifically targets and initiates translation of a subset of mRNAs involved in cell proliferation. This subunit can bind 18S rRNA. This is Eukaryotic translation initiation factor 3 subunit G from Chaetomium globosum (strain ATCC 6205 / CBS 148.51 / DSM 1962 / NBRC 6347 / NRRL 1970) (Soil fungus).